A 156-amino-acid chain; its full sequence is ATP synthase subunit b (156 aa).

The helical transmembrane segment at 5-27 threads the bilayer; the sequence is ITLIGQMITFAIFVGFTMKFVWP.

This sequence belongs to the ATPase B chain family. F-type ATPases have 2 components, F(1) - the catalytic core - and F(0) - the membrane proton channel. F(1) has five subunits: alpha(3), beta(3), gamma(1), delta(1), epsilon(1). F(0) has three main subunits: a(1), b(2) and c(10-14). The alpha and beta chains form an alternating ring which encloses part of the gamma chain. F(1) is attached to F(0) by a central stalk formed by the gamma and epsilon chains, while a peripheral stalk is formed by the delta and b chains.

The protein localises to the cell inner membrane. Functionally, f(1)F(0) ATP synthase produces ATP from ADP in the presence of a proton or sodium gradient. F-type ATPases consist of two structural domains, F(1) containing the extramembraneous catalytic core and F(0) containing the membrane proton channel, linked together by a central stalk and a peripheral stalk. During catalysis, ATP synthesis in the catalytic domain of F(1) is coupled via a rotary mechanism of the central stalk subunits to proton translocation. Its function is as follows. Component of the F(0) channel, it forms part of the peripheral stalk, linking F(1) to F(0). The polypeptide is ATP synthase subunit b (Francisella tularensis subsp. tularensis (strain WY96-3418)).